Here is a 293-residue protein sequence, read N- to C-terminus: Bifunctional protein FolD (293 aa).

Residues 164–166 (GRS), S193, and T234 each bind NADP(+).

This sequence belongs to the tetrahydrofolate dehydrogenase/cyclohydrolase family. In terms of assembly, homodimer.

It catalyses the reaction (6R)-5,10-methylene-5,6,7,8-tetrahydrofolate + NADP(+) = (6R)-5,10-methenyltetrahydrofolate + NADPH. The enzyme catalyses (6R)-5,10-methenyltetrahydrofolate + H2O = (6R)-10-formyltetrahydrofolate + H(+). Its pathway is one-carbon metabolism; tetrahydrofolate interconversion. Functionally, catalyzes the oxidation of 5,10-methylenetetrahydrofolate to 5,10-methenyltetrahydrofolate and then the hydrolysis of 5,10-methenyltetrahydrofolate to 10-formyltetrahydrofolate. The sequence is that of Bifunctional protein FolD from Bacteroides thetaiotaomicron (strain ATCC 29148 / DSM 2079 / JCM 5827 / CCUG 10774 / NCTC 10582 / VPI-5482 / E50).